We begin with the raw amino-acid sequence, 306 residues long: MSNWLVDKLIPSIMRSEVKKSSVPEGLWHKCPSCEAVLYRPELEKTLDVCPKCNHHMRIGARARLNIFLDVEGREELGADLEPVDRLKFRDGKKYKDRLTAAQKQTGEKDALISMSGTLLGMPVVASAFEFSFMGGSMGAIVGERFVRAANYALENRCPFVCFAASGGARMQEALISLMQMAKTSAVLARLREEGLPFISVLTDPVYGGVSASLAMLGDVIVAEPKALIGFAGPRVIEQTVREKLPEGFQRSEFLLDHGAIDMIVSRSELRPRLGNLLAQMMNLPTPRFVAPVIEPIVVPPAPATI.

Residues 27–296 (LWHKCPSCEA…PRFVAPVIEP (270 aa)) form the CoA carboxyltransferase N-terminal domain. Cysteine 31, cysteine 34, cysteine 50, and cysteine 53 together coordinate Zn(2+). A C4-type zinc finger spans residues 31–53 (CPSCEAVLYRPELEKTLDVCPKC).

Belongs to the AccD/PCCB family. Acetyl-CoA carboxylase is a heterohexamer composed of biotin carboxyl carrier protein (AccB), biotin carboxylase (AccC) and two subunits each of ACCase subunit alpha (AccA) and ACCase subunit beta (AccD). The cofactor is Zn(2+).

It localises to the cytoplasm. It catalyses the reaction N(6)-carboxybiotinyl-L-lysyl-[protein] + acetyl-CoA = N(6)-biotinyl-L-lysyl-[protein] + malonyl-CoA. The protein operates within lipid metabolism; malonyl-CoA biosynthesis; malonyl-CoA from acetyl-CoA: step 1/1. Its function is as follows. Component of the acetyl coenzyme A carboxylase (ACC) complex. Biotin carboxylase (BC) catalyzes the carboxylation of biotin on its carrier protein (BCCP) and then the CO(2) group is transferred by the transcarboxylase to acetyl-CoA to form malonyl-CoA. This is Acetyl-coenzyme A carboxylase carboxyl transferase subunit beta from Pseudomonas syringae pv. syringae (strain B728a).